A 523-amino-acid chain; its full sequence is uncharacterized protein (523 aa).

One can recognise a Radical SAM core domain in the interval arginine 193–arginine 447. [4Fe-4S] cluster contacts are provided by cysteine 212, cysteine 220, and cysteine 223.

It depends on [4Fe-4S] cluster as a cofactor.

This is an uncharacterized protein from Methanopyrus kandleri (strain AV19 / DSM 6324 / JCM 9639 / NBRC 100938).